A 217-amino-acid polypeptide reads, in one-letter code: Ribonuclease HII (217 aa).

Residues Ser27 to Cys216 enclose the RNase H type-2 domain. A divalent metal cation-binding residues include Asp33, Glu34, and Asp126.

The protein belongs to the RNase HII family. It depends on Mn(2+) as a cofactor. Requires Mg(2+) as cofactor.

The protein localises to the cytoplasm. The catalysed reaction is Endonucleolytic cleavage to 5'-phosphomonoester.. Functionally, endonuclease that specifically degrades the RNA of RNA-DNA hybrids. In Chlamydia trachomatis serovar L2 (strain ATCC VR-902B / DSM 19102 / 434/Bu), this protein is Ribonuclease HII.